We begin with the raw amino-acid sequence, 223 residues long: Endonuclease NucS (223 aa).

The protein belongs to the NucS endonuclease family.

It is found in the cytoplasm. Functionally, cleaves both 3' and 5' ssDNA extremities of branched DNA structures. The chain is Endonuclease NucS from Mycolicibacterium gilvum (strain PYR-GCK) (Mycobacterium gilvum (strain PYR-GCK)).